Reading from the N-terminus, the 127-residue chain is MAEITKADVVSFIENMTVLELSELVKELEEKFGVSAAAPVAVAAAAAPAAAAEAAEEKTEFDIILKSAGANKIGVIKVVRALTGLGLKEAKDLVDGAPKSVKTGVSKEEAEDAKKQLVESGAEVEIK.

The interval 101-127 (VKTGVSKEEAEDAKKQLVESGAEVEIK) is disordered. The segment covering 105–117 (VSKEEAEDAKKQL) has biased composition (basic and acidic residues).

The protein belongs to the bacterial ribosomal protein bL12 family. In terms of assembly, homodimer. Part of the ribosomal stalk of the 50S ribosomal subunit. Forms a multimeric L10(L12)X complex, where L10 forms an elongated spine to which 2 to 4 L12 dimers bind in a sequential fashion. Binds GTP-bound translation factors.

Functionally, forms part of the ribosomal stalk which helps the ribosome interact with GTP-bound translation factors. Is thus essential for accurate translation. The chain is Large ribosomal subunit protein bL12 from Geobacter metallireducens (strain ATCC 53774 / DSM 7210 / GS-15).